The sequence spans 303 residues: Crk-like protein (303 aa).

In terms of domain architecture, SH2 spans 14–102; the sequence is WYMGPVSRQE…LDTTTLIEPA (89 aa). One can recognise an SH3 1 domain in the interval 123 to 183; sequence ENLEYVRTLY…PVPYVEKLVR (61 aa). Tyr127 carries the phosphotyrosine modification. The interval 184-204 is disordered; sequence SSPHGKHGNRNSNSYGIPEPA. Tyr207 is modified (phosphotyrosine). Residues 235-296 enclose the SH3 2 domain; sequence NGPVFAKAIQ…PFTHVKIFDP (62 aa).

The protein belongs to the CRK family. As to quaternary structure, interacts with INPP5D/SHIP1. Interacts with DOCK2 and EPOR. Interacts with phosphorylated CBLB and IRS4. Interacts with BCAR1/CAS and NEDD9/HEF1.

May mediate the transduction of intracellular signals. In Rattus norvegicus (Rat), this protein is Crk-like protein.